The chain runs to 579 residues: Putative laccase-9 (579 aa).

An N-terminal signal peptide occupies residues 1–27 (MGTAKLPALLWLLAGVVLALAVNPAHG). Plastocyanin-like domains are found at residues 36-152 (FITE…PKRG) and 162-319 (KEIP…YTDS). 2 N-linked (GlcNAc...) asparagine glycosylation sites follow: Asn41 and Asn82. Positions 86 and 88 each coordinate Cu cation. An N-linked (GlcNAc...) asparagine glycan is attached at Asn114. 2 residues coordinate Cu cation: His131 and His133. Residues Asn307, Asn405, and Asn446 are each glycosylated (N-linked (GlcNAc...) asparagine). The region spanning 436–563 (PTAFVDPPVN…DTVFIVKDGK (128 aa)) is the Plastocyanin-like 3 domain. 3 residues coordinate Cu cation: His480, His483, and His485. Residue Asn496 is glycosylated (N-linked (GlcNAc...) asparagine). His542, Cys543, His544, His548, and Met553 together coordinate Cu cation.

The protein belongs to the multicopper oxidase family. Requires Cu cation as cofactor.

It localises to the secreted. The protein resides in the extracellular space. It is found in the apoplast. It carries out the reaction 4 hydroquinone + O2 = 4 benzosemiquinone + 2 H2O. Lignin degradation and detoxification of lignin-derived products. In Oryza sativa subsp. japonica (Rice), this protein is Putative laccase-9 (LAC9).